Here is a 543-residue protein sequence, read N- to C-terminus: CTP synthase (543 aa).

The tract at residues 1-265 (MARYIFITGG…DGEVLRHFGL (265 aa)) is amidoligase domain. CTP is bound at residue Ser-13. UTP is bound at residue Ser-13. Residue 14-19 (SLGKGL) participates in ATP binding. Position 54 (Tyr-54) interacts with L-glutamine. ATP is bound at residue Asp-71. Asp-71 and Glu-139 together coordinate Mg(2+). Residues 146–148 (DIE), 186–191 (KTKPTQ), and Lys-222 contribute to the CTP site. UTP contacts are provided by residues 186–191 (KTKPTQ) and Lys-222. A Glutamine amidotransferase type-1 domain is found at 290–542 (TIGVVGKYVG…IAAAVKQARL (253 aa)). L-glutamine is bound at residue Gly-354. The Nucleophile; for glutamine hydrolysis role is filled by Cys-381. Residues 382–385 (LGMQ), Glu-405, and Arg-470 each bind L-glutamine. Catalysis depends on residues His-515 and Glu-517.

It belongs to the CTP synthase family. In terms of assembly, homotetramer.

It carries out the reaction UTP + L-glutamine + ATP + H2O = CTP + L-glutamate + ADP + phosphate + 2 H(+). It catalyses the reaction L-glutamine + H2O = L-glutamate + NH4(+). The enzyme catalyses UTP + NH4(+) + ATP = CTP + ADP + phosphate + 2 H(+). It participates in pyrimidine metabolism; CTP biosynthesis via de novo pathway; CTP from UDP: step 2/2. With respect to regulation, allosterically activated by GTP, when glutamine is the substrate; GTP has no effect on the reaction when ammonia is the substrate. The allosteric effector GTP functions by stabilizing the protein conformation that binds the tetrahedral intermediate(s) formed during glutamine hydrolysis. Inhibited by the product CTP, via allosteric rather than competitive inhibition. Its function is as follows. Catalyzes the ATP-dependent amination of UTP to CTP with either L-glutamine or ammonia as the source of nitrogen. Regulates intracellular CTP levels through interactions with the four ribonucleotide triphosphates. This chain is CTP synthase, found in Novosphingobium aromaticivorans (strain ATCC 700278 / DSM 12444 / CCUG 56034 / CIP 105152 / NBRC 16084 / F199).